The sequence spans 381 residues: Tafazzin (381 aa).

At 1–25 (MSFRDVLERGDEFLEAYPRRSPLWR) the chain is on the mitochondrial intermembrane side. An intramembrane segment occupies 26–47 (FLSYSTSLLTFGVSKLLLFTCY). Residues 48-381 (NVKLNGFEKL…PEGKPKGKDD (334 aa)) are Mitochondrial intermembrane-facing. The short motif at 77 to 82 (HMSMVD) is the HXXXXD motif element. The interval 215–232 (LEATKPPIVVPIFATGFE) is required for membrane insertion.

The protein belongs to the taffazin family.

It localises to the mitochondrion outer membrane. It is found in the mitochondrion inner membrane. The enzyme catalyses 1'-[1,2-diacyl-sn-glycero-3-phospho],3'-[1-acyl-sn-glycero-3-phospho]-glycerol + a 1,2-diacyl-sn-glycero-3-phosphocholine = a cardiolipin + a 1-acyl-sn-glycero-3-phosphocholine. It catalyses the reaction 1,2-di-(9Z,12Z-octadecadienoyl)-sn-glycero-3-phosphocholine + 1'-[1,2-di-(9Z,12Z-octadecadienoyl)-sn-glycero-3-phospho]-3'-[1-(9Z,12Z-octadecadienoyl)-sn-glycero-3-phospho]-glycerol = 1-(9Z,12Z)-octadecadienoyl-sn-glycero-3-phosphocholine + 1',3'-bis-[1,2-di-(9Z,12Z-octadecadienoyl)-sn-glycero-3-phospho]-glycerol. The catalysed reaction is 1'-[1,2-di-(9Z-octadecenoyl)-sn-glycero-3-phospho]-3'-[1-(9Z-octadecenoyl)-2-hexadecanoyl-sn-glycero-3-phospho]-glycerol + 1-hexadecanoyl-sn-glycero-3-phosphocholine = 1'-[1,2-di-(9Z-octadecenoyl)-sn-glycero-3-phospho]-3'-[1-(9Z-octadecenoyl)-sn-glycero-3-phospho]-glycerol + 1,2-dihexadecanoyl-sn-glycero-3-phosphocholine. It carries out the reaction 1'-[1,2-di-(9Z-octadecenoyl)-sn-glycero-3-phospho]-3'-[1-(9Z-octadecenoyl)-2-(9Z-hexadecenoyl)-sn-glycero-3-phospho]-glycerol + 1-(9Z-hexadecenoyl)-sn-glycero-3-phosphocholine = 1,2-di-(9Z-hexadecenoyl)-sn-glycero-3-phosphocholine + 1'-[1,2-di-(9Z-octadecenoyl)-sn-glycero-3-phospho]-3'-[1-(9Z-octadecenoyl)-sn-glycero-3-phospho]-glycerol. The enzyme catalyses 1',3'-bis[1,2-di-(9Z-octadecenoyl)-sn-glycero-3-phospho]-glycerol + 1-(9Z-octadecenoyl)-sn-glycero-3-phosphocholine = 1'-[1,2-di-(9Z-octadecenoyl)-sn-glycero-3-phospho]-3'-[1-(9Z-octadecenoyl)-sn-glycero-3-phospho]-glycerol + 1,2-di-(9Z-octadecenoyl)-sn-glycero-3-phosphocholine. It catalyses the reaction 1'-[1,2-di-(9Z-octadecenoyl)-sn-glycero-3-phospho]-3'-[1-(9Z-octadecenoyl)-2-(9Z,12Z-octadecadienoyl)-sn-glycero-3-phospho]-glycerol + 1-(9Z,12Z)-octadecadienoyl-sn-glycero-3-phosphocholine = 1,2-di-(9Z,12Z-octadecadienoyl)-sn-glycero-3-phosphocholine + 1'-[1,2-di-(9Z-octadecenoyl)-sn-glycero-3-phospho]-3'-[1-(9Z-octadecenoyl)-sn-glycero-3-phospho]-glycerol. The catalysed reaction is 1'-[1,2-di-(9Z-octadecenoyl)-sn-glycero-3-phospho]-3'-[1-(9Z-octadecenoyl)-2-(9Z-hexadecenoyl)-sn-glycero-3-phospho]-glycerol + 1-hexadecanoyl-sn-glycero-3-phosphocholine = 1-hexadecanoyl-2-(9Z-hexadecenoyl)-sn-glycero-3-phosphocholine + 1'-[1,2-di-(9Z-octadecenoyl)-sn-glycero-3-phospho]-3'-[1-(9Z-octadecenoyl)-sn-glycero-3-phospho]-glycerol. It carries out the reaction 1'-[1,2-di-(9Z-octadecenoyl)-sn-glycero-3-phospho]-3'-[1-(9Z-octadecenoyl)-2-hexadecanoyl-sn-glycero-3-phospho]-glycerol + 1-(9Z-hexadecenoyl)-sn-glycero-3-phosphocholine = 1-(9Z-hexadecenoyl)-2-hexadecanoyl-sn-glycero-3-phosphocholine + 1'-[1,2-di-(9Z-octadecenoyl)-sn-glycero-3-phospho]-3'-[1-(9Z-octadecenoyl)-sn-glycero-3-phospho]-glycerol. The enzyme catalyses 2 1'-[1,2-diacyl-sn-glycero-3-phospho],3'-[1-acyl-sn-glycero-3-phospho]-glycerol = 1',3'-bis-[1-acyl-sn-glycero-3-phospho]-glycerol + a cardiolipin. It catalyses the reaction 2 1'-[1,2-di-(9Z-octadecenoyl)-sn-glycero-3-phospho]-3'-[1-(9Z-octadecenoyl)-sn-glycero-3-phospho]-glycerol = 1',3'-bis-[1-(9Z-octadecenoyl)-sn-glycero-3-phospho]-glycerol + 1',3'-bis[1,2-di-(9Z-octadecenoyl)-sn-glycero-3-phospho]-glycerol. The catalysed reaction is 1,2-di-(9Z-hexadecenoyl)-sn-glycero-3-phosphocholine + 1-hexadecanoyl-sn-glycero-3-phosphocholine = 1-hexadecanoyl-2-(9Z-hexadecenoyl)-sn-glycero-3-phosphocholine + 1-(9Z-hexadecenoyl)-sn-glycero-3-phosphocholine. It carries out the reaction 1'-[1,2-di-(9Z,12Z-octadecadienoyl)-sn-glycero-3-phospho]-3'-[1-(9Z,12Z-octadecadienoyl)-sn-glycero-3-phospho]-glycerol + 1,2-di-(9Z-octadecenoyl)-sn-glycero-3-phosphocholine = 1'-[1,2-di-(9Z,12Z-octadecadienoyl)-sn-glycero-3-phospho]-3'-[1-(9Z,12Z-octadecadienoyl)-2-(9Z-octadecenoyl)-sn-glycero-3-phospho]-glycerol + 1-(9Z-octadecenoyl)-sn-glycero-3-phosphocholine. It functions in the pathway phospholipid metabolism. Its function is as follows. Acyltransferase required to remodel newly synthesized phospholipid cardiolipin (1',3'-bis-[1,2-diacyl-sn-glycero-3-phospho]-glycerol or CL), a key component of the mitochondrial inner membrane, with tissue specific acyl chains necessary for adequate mitochondrial function. Its role in cellular physiology is to improve mitochondrial performance. CL is critical for the coassembly of lipids and proteins in mitochondrial membranes, for instance, remodeling of the acyl groups of CL in the mitochondrial inner membrane affects the assembly and stability of respiratory chain complex IV and its supercomplex forms. Catalyzes the transacylation between phospholipids and lysophospholipids, with the highest rate being between phosphatidylcholine (1,2-diacyl-sn-glycero-3-phosphocholine or PC) and CL. Catalyzes both 1-acyl-sn-glycero-3-phosphocholine (lysophosphatidylcholine or LPC) reacylation and PC-CL transacylation, that means, it exchanges acyl groups between CL and PC by a combination of forward and reverse transacylations. Also catalyzes transacylations between other phospholipids such as phosphatidylethanolamine (1,2-diacyl-sn-glycero-3-phosphoethanolamine or PE) and CL, between PC and PE, and between PC and phosphatidate (1,2-diacyl-sn-glycero-3-phosphate or PA), although at lower rate. Not regiospecific, it transfers acyl groups into any of the sn-1 and sn-2 positions of the monolysocardiolipin (MLCL), which is an important prerequisite for uniformity and symmetry in CL acyl distribution. Cannot transacylate dilysocardiolipin (DLCL), thus, the role of MLCL is limited to that of an acyl acceptor. CoA-independent, it can reshuffle molecular species within a single phospholipid class. Redistributes fatty acids between MLCL, CL, and other lipids, which prolongs the half-life of CL. Its action is completely reversible, which allows for cyclic changes, such as fission and fusion or bending and flattening of the membrane. Hence, by contributing to the flexibility of the lipid composition, it plays an important role in the dynamics of mitochondria membranes. Essential for the final stage of spermatogenesis, spermatid individualization. Required for the initiation of mitophagy. This Saccharomyces cerevisiae (strain ATCC 204508 / S288c) (Baker's yeast) protein is Tafazzin (TAZ1).